The primary structure comprises 204 residues: Small ribosomal subunit protein uS4 (204 aa).

The segment at 25 to 47 is disordered; the sequence is SPVNKREYGPGQHGQRRKKPSDY. One can recognise an S4 RNA-binding domain in the interval 93–156; sequence RRLDAVVYRM…KQFAFVMEAA (64 aa).

Belongs to the universal ribosomal protein uS4 family. Part of the 30S ribosomal subunit. Contacts protein S5. The interaction surface between S4 and S5 is involved in control of translational fidelity.

In terms of biological role, one of the primary rRNA binding proteins, it binds directly to 16S rRNA where it nucleates assembly of the body of the 30S subunit. With S5 and S12 plays an important role in translational accuracy. The polypeptide is Small ribosomal subunit protein uS4 (Rhodospirillum centenum (strain ATCC 51521 / SW)).